A 150-amino-acid chain; its full sequence is Regulatory protein RecX (150 aa).

This sequence belongs to the RecX family.

It localises to the cytoplasm. Its function is as follows. Modulates RecA activity. In Acidithiobacillus ferrooxidans (strain ATCC 23270 / DSM 14882 / CIP 104768 / NCIMB 8455) (Ferrobacillus ferrooxidans (strain ATCC 23270)), this protein is Regulatory protein RecX.